The sequence spans 288 residues: Thymidylate synthase (288 aa).

Residues Arg-21 and 150–151 contribute to the dUMP site; that span reads RR. Residue Cys-170 is the Nucleophile of the active site. Residues 191 to 194, Asn-202, and 232 to 234 each bind dUMP; these read RSGD and HIY. Residue Asp-194 coordinates (6R)-5,10-methylene-5,6,7,8-tetrahydrofolate. (6R)-5,10-methylene-5,6,7,8-tetrahydrofolate is bound at residue Ala-287.

It belongs to the thymidylate synthase family. Bacterial-type ThyA subfamily. In terms of assembly, homodimer.

The protein localises to the cytoplasm. It carries out the reaction dUMP + (6R)-5,10-methylene-5,6,7,8-tetrahydrofolate = 7,8-dihydrofolate + dTMP. The protein operates within pyrimidine metabolism; dTTP biosynthesis. Catalyzes the reductive methylation of 2'-deoxyuridine-5'-monophosphate (dUMP) to 2'-deoxythymidine-5'-monophosphate (dTMP) while utilizing 5,10-methylenetetrahydrofolate (mTHF) as the methyl donor and reductant in the reaction, yielding dihydrofolate (DHF) as a by-product. This enzymatic reaction provides an intracellular de novo source of dTMP, an essential precursor for DNA biosynthesis. The sequence is that of Thymidylate synthase from Mesoplasma florum (strain ATCC 33453 / NBRC 100688 / NCTC 11704 / L1) (Acholeplasma florum).